The following is a 211-amino-acid chain: C-type lectin domain family 2 member L (211 aa).

The tract at residues 1-53 (MEPAREPPARARPPPPAARPAPAAPRPRSPAEAEARGPEGLLRRSGSGYEGST) is disordered. Over residues 10–28 (RARPPPPAARPAPAAPRPR) the composition is skewed to pro residues. S29 is modified (phosphoserine). The helical transmembrane segment at 66-86 (LLLGAIAVLLFAILVVMSILA) threads the bilayer. A C-type lectin domain is found at 104–206 (YGRKCYYFSE…CLTTRPWVCS (103 aa)). 2 disulfide bridges follow: C125–C205 and C184–C197.

It is found in the membrane. The sequence is that of C-type lectin domain family 2 member L (Clec2l) from Mus musculus (Mouse).